The chain runs to 165 residues: Cyclic pyranopterin monophosphate synthase (165 aa).

Residues 76 to 78 (LCH) and 119 to 120 (ME) each bind substrate. Asp134 is a catalytic residue.

It belongs to the MoaC family. In terms of assembly, homohexamer; trimer of dimers.

It carries out the reaction (8S)-3',8-cyclo-7,8-dihydroguanosine 5'-triphosphate = cyclic pyranopterin phosphate + diphosphate. It participates in cofactor biosynthesis; molybdopterin biosynthesis. In terms of biological role, catalyzes the conversion of (8S)-3',8-cyclo-7,8-dihydroguanosine 5'-triphosphate to cyclic pyranopterin monophosphate (cPMP). This chain is Cyclic pyranopterin monophosphate synthase, found in Photobacterium profundum (strain SS9).